A 34-amino-acid chain; its full sequence is Omega-ctenitoxin-Pn2a (34 aa).

3 disulfide bridges follow: Cys2–Cys16, Cys9–Cys26, and Cys15–Cys28.

The protein belongs to the neurotoxin 02 (plectoxin) family. 01 (Tx3) subfamily. Expressed by the venom gland.

It is found in the secreted. Inhibits all known high-voltage activated calcium channels (L-, P/Q- and R-type currents) (Cav), and most effectively the P/Q- (Cav2.1/CACNA1A) and R-type (Cav2.3/CACNA1E) currents. In rat brain, inhibits glutamate release, neuronal death and loss of neurotransmission in the hippocampus resulting from ischemia. In vivo, induces rapid general flaccid paralysis followed by death in 10-30 minutes at dose levels of 5 ug per mouse. The protein is Omega-ctenitoxin-Pn2a of Phoneutria nigriventer (Brazilian armed spider).